Consider the following 187-residue polypeptide: Protein GrpE (187 aa).

The tract at residues 1 to 30 (MEKKETKNETEKTNKQDNKNTKSQKKENLN) is disordered.

The protein belongs to the GrpE family. In terms of assembly, homodimer.

It localises to the cytoplasm. Its function is as follows. Participates actively in the response to hyperosmotic and heat shock by preventing the aggregation of stress-denatured proteins, in association with DnaK and GrpE. It is the nucleotide exchange factor for DnaK and may function as a thermosensor. Unfolded proteins bind initially to DnaJ; upon interaction with the DnaJ-bound protein, DnaK hydrolyzes its bound ATP, resulting in the formation of a stable complex. GrpE releases ADP from DnaK; ATP binding to DnaK triggers the release of the substrate protein, thus completing the reaction cycle. Several rounds of ATP-dependent interactions between DnaJ, DnaK and GrpE are required for fully efficient folding. The sequence is that of Protein GrpE from Borreliella afzelii (strain PKo) (Borrelia afzelii).